Consider the following 246-residue polypeptide: Large ribosomal subunit protein uL2 (246 aa).

Positions 196 to 226 (MSPYAHPHGGGSHQKGGTPVPKTAPPGQKVG) are disordered.

Belongs to the universal ribosomal protein uL2 family. As to quaternary structure, part of the 50S ribosomal subunit. Forms a bridge to the 30S subunit in the 70S ribosome.

One of the primary rRNA binding proteins. Required for association of the 30S and 50S subunits to form the 70S ribosome, for tRNA binding and peptide bond formation. It has been suggested to have peptidyltransferase activity; this is somewhat controversial. Makes several contacts with the 16S rRNA in the 70S ribosome. This chain is Large ribosomal subunit protein uL2, found in Pyrobaculum arsenaticum (strain DSM 13514 / JCM 11321 / PZ6).